The chain runs to 611 residues: Creatine transporter (611 aa).

The helical transmembrane segment at 45-65 threads the bilayer; sequence FIMSCVGFAVGLGNVWRFPYL. Topologically, residues 66–71 are extracellular; sequence CYKNGG. A helical transmembrane segment spans residues 72 to 92; the sequence is GVFLIPYLLVAVFGGIPIFFL. Residues 93-122 are Cytoplasmic-facing; it reads EISLGQFMKAGGINAWNIAPLFKGLGYASM. A helical transmembrane segment spans residues 123–143; that stretch reads VIVFFCNTYYILVLTWSSFYL. Residues 144–207 lie on the Extracellular side of the membrane; it reads VQSFSSPLPW…LSSGLGDVGE (64 aa). Residues N157 and N171 are each glycosylated (N-linked (GlcNAc...) asparagine). The chain crosses the membrane as a helical span at residues 208–228; the sequence is IGWELTLCLTATWMLVYFCIW. Topologically, residues 229 to 246 are cytoplasmic; that stretch reads KGVKTSGKVVYVTATFPY. A helical transmembrane segment spans residues 247-267; it reads IILVILLVRGVTLHGAVQGIV. Residues 268–281 are Extracellular-facing; sequence YYLQPDWGKLGEAQ. The chain crosses the membrane as a helical span at residues 282 to 302; that stretch reads VWIDAGTQIFFSYAIGLGTLT. The Cytoplasmic portion of the chain corresponds to 303-318; the sequence is ALGSYNQLHNDCYKDA. The helical transmembrane segment at 319 to 339 threads the bilayer; sequence FILSLVNSATSFFAGLVVFSI. Residues 340–371 are Extracellular-facing; sequence LGFMAVEEGVDISVVAESGPGLAFIAYPKAVT. A helical membrane pass occupies residues 372–392; it reads LMPFPQVWAVLFFIMLLCLGL. Residues 393–421 are Cytoplasmic-facing; sequence GSQFVGVEGFVTAILDLWPSKFSFRYLRE. Residues 422–442 traverse the membrane as a helical segment; the sequence is VVVAMVICLSFLIDLSMITEG. Residues 443-456 are Extracellular-facing; the sequence is GMYIFQIFDYYSAS. The chain crosses the membrane as a helical span at residues 457–477; that stretch reads GTTLLWTAFWECVAVAWVYGG. Topologically, residues 478–497 are cytoplasmic; sequence DRYLDDLAWMLGYRPWALVK. The chain crosses the membrane as a helical span at residues 498–518; sequence WCWSVITPLVCMGIFTFHLVN. Over 519–537 the chain is Extracellular; it reads YKPLTYNKTYTYPWWGEAI. N-linked (GlcNAc...) asparagine glycosylation is present at N525. A helical membrane pass occupies residues 538 to 558; sequence GWCLALASMLCVPTTVLYSLS. Topologically, residues 559–611 are cytoplasmic; sequence RGRGSLKERWRKLTTPVWASHHLAYKMAGAKINQPCEGVVSCEEKVVIFESVL.

It belongs to the sodium:neurotransmitter symporter (SNF) (TC 2.A.22) family.

It is found in the membrane. Functionally, required for the uptake of creatine. This is Creatine transporter from Torpedo marmorata (Marbled electric ray).